We begin with the raw amino-acid sequence, 111 residues long: MEAKFAHIILFFLLAFSFETLMARKESDGPEVIKLLKEFESDSRCKGKQFWPELIGVPALYAKGIIEKENPSITNIPILLNGSPVTKDFRCDRVRLFVNILGDVVQIPRVT.

Residues 1-23 (MEAKFAHIILFFLLAFSFETLMA) form the signal peptide. A propeptide spanning residues 24-36 (RKESDGPEVIKLL) is cleaved from the precursor.

The protein belongs to the protease inhibitor I13 (potato type I serine protease inhibitor) family.

The protein localises to the secreted. This chain is Wound-induced proteinase inhibitor 1, found in Solanum peruvianum (Peruvian tomato).